The primary structure comprises 565 residues: SRSF protein kinase 3 (565 aa).

The tract at residues 1–44 is disordered; sequence MSANAGGSGSVDCGGSSSSSQTSCGPESSGSELTPATPAPRLLQ. The segment covering 10–31 has biased composition (low complexity); it reads SVDCGGSSSSSQTSCGPESSGS. Serine 49 carries the phosphoserine modification. In terms of domain architecture, Protein kinase spans 78–563; that stretch reads YHVVRKLGWG…AADCLQHPWL (486 aa). Residues 84–92 and lysine 107 each bind ATP; that span reads LGWGHFSTV. Residue aspartate 211 is the Proton acceptor of the active site. Polar residues predominate over residues 236–253; that stretch reads WQQSGAQPPSRSTVSTAP. Disordered stretches follow at residues 236–280 and 295–350; these read WQQS…KRLL and AAVQ…QTSG. Over residues 262–277 the composition is skewed to basic residues; it reads SKNKRKKMRRKRKQQK. The span at 325 to 350 shows a compositional bias: low complexity; that stretch reads AGPSPASSSPVPGGERSLSPSSQTSG. The residue at position 328 (serine 328) is a Phosphoserine.

This sequence belongs to the protein kinase superfamily. CMGC Ser/Thr protein kinase family. Exclusively expressed in skeletal and heart muscle.

The protein localises to the nucleus. The protein resides in the cytoplasm. It carries out the reaction L-seryl-[protein] + ATP = O-phospho-L-seryl-[protein] + ADP + H(+). It catalyses the reaction L-threonyl-[protein] + ATP = O-phospho-L-threonyl-[protein] + ADP + H(+). Functionally, serine/arginine-rich protein-specific kinase which specifically phosphorylates its substrates at serine residues located in regions rich in arginine/serine dipeptides, known as RS domains. Phosphorylates the SR splicing factor SRSF1 and the lamin-B receptor (LBR) in vitro. Required for normal muscle development. The sequence is that of SRSF protein kinase 3 (Srpk3) from Mus musculus (Mouse).